A 644-amino-acid chain; its full sequence is Exoribonuclease 2 (644 aa).

The region spanning 189-516 (REDLTSLDFV…NHRLLKAVIK (328 aa)) is the RNB domain. In terms of domain architecture, S1 motif spans 561 to 643 (GTRFAAEIVD…ETRSIIARPV (83 aa)).

The protein belongs to the RNR ribonuclease family. RNase II subfamily.

It is found in the cytoplasm. The enzyme catalyses Exonucleolytic cleavage in the 3'- to 5'-direction to yield nucleoside 5'-phosphates.. Its function is as follows. Involved in mRNA degradation. Hydrolyzes single-stranded polyribonucleotides processively in the 3' to 5' direction. This is Exoribonuclease 2 from Shigella flexneri serotype 5b (strain 8401).